We begin with the raw amino-acid sequence, 268 residues long: MFDSIIIGQYVPGDSVVHRLDPRVKLTAVFIFLVFMFMTRDPLLLTVAVLLSFGGLLASRVPLSFYAKGMRFISIIIVLTFVLHLFMTGGGEVIVELPFATIYSGGLIEGFMLAMKLAMIITIASLLTLTTTPIDLTDGMERMLAPFKRVKLPTHELALMMSIALRFIPTLIEETRTIVLAQLARGTNFSEGSLWKRLKALIPILVPLFTQSFKRAEELATAMEARGYAGGEGRTKYRQLHWGLKDSVVLAVFLLFAAAVMAERFMGG.

5 helical membrane-spanning segments follow: residues 29-49, 75-95, 107-127, 152-172, and 242-262; these read VFIF…TVAV, IIIV…EVIV, LIEG…ASLL, LPTH…PTLI, and WGLK…AVMA.

This sequence belongs to the energy-coupling factor EcfT family. Forms a stable energy-coupling factor (ECF) transporter complex composed of 2 membrane-embedded substrate-binding proteins (S component), 2 ATP-binding proteins (A component) and 2 transmembrane proteins (T component). May be able to interact with more than 1 S component at a time.

It localises to the cell membrane. Functionally, transmembrane (T) component of an energy-coupling factor (ECF) ABC-transporter complex. Unlike classic ABC transporters this ECF transporter provides the energy necessary to transport a number of different substrates. The sequence is that of Energy-coupling factor transporter transmembrane protein EcfT from Bacillus selenitireducens (strain ATCC 700615 / DSM 15326 / MLS10).